The chain runs to 700 residues: Methionine--tRNA ligase (700 aa).

Positions 14–24 match the 'HIGH' region motif; sequence PYANGPVHLGH. Residues C146, C149, C159, and C162 each contribute to the Zn(2+) site. A 'KMSKS' region motif is present at residues 343–347; that stretch reads KFSKS. An ATP-binding site is contributed by K346. One can recognise a tRNA-binding domain in the interval 599–700; it reads EFEKIDLRVA…GDSIVGKPVK (102 aa).

This sequence belongs to the class-I aminoacyl-tRNA synthetase family. MetG type 1 subfamily. In terms of assembly, homodimer. Zn(2+) is required as a cofactor.

The protein resides in the cytoplasm. It catalyses the reaction tRNA(Met) + L-methionine + ATP = L-methionyl-tRNA(Met) + AMP + diphosphate. Functionally, is required not only for elongation of protein synthesis but also for the initiation of all mRNA translation through initiator tRNA(fMet) aminoacylation. The chain is Methionine--tRNA ligase from Chloroherpeton thalassium (strain ATCC 35110 / GB-78).